The primary structure comprises 490 residues: 4-hydroxybutyryl-CoA dehydratase/vinylacetyl-CoA-Delta-isomerase (490 aa).

Residues C99 and C103 each coordinate [4Fe-4S] cluster. FAD is bound by residues 149–156 and 188–190; these read MTDPKGDR and HQT. [4Fe-4S] cluster is bound by residues H292 and C299. Residues H325 and 386–390 contribute to the FAD site; that span reads DIAGG.

In terms of assembly, homotetramer. The cofactor is FAD. [4Fe-4S] cluster serves as cofactor.

The catalysed reaction is 4-hydroxybutanoyl-CoA = (2E)-butenoyl-CoA + H2O. The enzyme catalyses vinylacetyl-CoA = (2E)-butenoyl-CoA. Its function is as follows. Catalyzes the reversible conversion of 4-hydroxybutyryl-CoA to crotonyl-CoA. The mechanism of the reaction seems to go through three steps: (1) the FAD-dependent oxidation of 4-hydroxybutyryl-CoA to 4-hydroxycrotonyl-CoA; (2) the hydroxyl group is substituted by a hydride derived from the now reduced FAD in an SN2' reaction leading to vinylacetyl-CoA; (3) isomerization to yield crotonyl-CoA. In Clostridium aminobutyricum, this protein is 4-hydroxybutyryl-CoA dehydratase/vinylacetyl-CoA-Delta-isomerase (abfD).